The primary structure comprises 214 residues: Adenylate kinase (214 aa).

10–15 lines the ATP pocket; that stretch reads GAGKGT. The segment at 30–59 is NMP; the sequence is STGDLLREEIANNTELGKQAKKLIDGGNLV. Residues T31, R36, 57 to 59, 83 to 86, and Q90 contribute to the AMP site; these read NLV and GFPR. The interval 124–161 is LID; the sequence is LRRQCKNCGNIFNLRFIKNFDGKCPKCGSTDIYQRADD. Residue R125 coordinates ATP. C128 and C131 together coordinate Zn(2+). 134–135 contacts ATP; sequence IF. Zn(2+) is bound by residues C147 and C150. The AMP site is built by R158 and R169. K197 is a binding site for ATP.

It belongs to the adenylate kinase family. Monomer.

It localises to the cytoplasm. The enzyme catalyses AMP + ATP = 2 ADP. It participates in purine metabolism; AMP biosynthesis via salvage pathway; AMP from ADP: step 1/1. Functionally, catalyzes the reversible transfer of the terminal phosphate group between ATP and AMP. Plays an important role in cellular energy homeostasis and in adenine nucleotide metabolism. The protein is Adenylate kinase of Elusimicrobium minutum (strain Pei191).